Here is a 245-residue protein sequence, read N- to C-terminus: 3-deoxy-manno-octulosonate cytidylyltransferase (245 aa).

The protein belongs to the KdsB family.

The protein resides in the cytoplasm. It carries out the reaction 3-deoxy-alpha-D-manno-oct-2-ulosonate + CTP = CMP-3-deoxy-beta-D-manno-octulosonate + diphosphate. It functions in the pathway nucleotide-sugar biosynthesis; CMP-3-deoxy-D-manno-octulosonate biosynthesis; CMP-3-deoxy-D-manno-octulosonate from 3-deoxy-D-manno-octulosonate and CTP: step 1/1. Its pathway is bacterial outer membrane biogenesis; lipopolysaccharide biosynthesis. Activates KDO (a required 8-carbon sugar) for incorporation into bacterial lipopolysaccharide in Gram-negative bacteria. The polypeptide is 3-deoxy-manno-octulosonate cytidylyltransferase (Elusimicrobium minutum (strain Pei191)).